A 157-amino-acid chain; its full sequence is Phosphopantetheine adenylyltransferase (157 aa).

Residue Thr-8 participates in substrate binding. Residues Thr-8–Phe-9 and His-16 contribute to the ATP site. The substrate site is built by Lys-40, Thr-72, and Arg-86. ATP-binding positions include Gly-87–Arg-89, Glu-97, and Tyr-122–Ser-128.

Belongs to the bacterial CoaD family. In terms of assembly, homohexamer. Mg(2+) serves as cofactor.

Its subcellular location is the cytoplasm. It carries out the reaction (R)-4'-phosphopantetheine + ATP + H(+) = 3'-dephospho-CoA + diphosphate. The protein operates within cofactor biosynthesis; coenzyme A biosynthesis; CoA from (R)-pantothenate: step 4/5. Reversibly transfers an adenylyl group from ATP to 4'-phosphopantetheine, yielding dephospho-CoA (dPCoA) and pyrophosphate. The sequence is that of Phosphopantetheine adenylyltransferase from Prochlorococcus marinus (strain MIT 9301).